Here is a 157-residue protein sequence, read N- to C-terminus: 2-C-methyl-D-erythritol 2,4-cyclodiphosphate synthase (157 aa).

The a divalent metal cation site is built by aspartate 8 and histidine 10. Residues 8 to 10 and 34 to 35 contribute to the 4-CDP-2-C-methyl-D-erythritol 2-phosphate site; these read DVH and HS. Position 42 (histidine 42) interacts with a divalent metal cation. 4-CDP-2-C-methyl-D-erythritol 2-phosphate contacts are provided by residues 56–58, 61–65, 100–106, 132–135, phenylalanine 139, and arginine 142; these read DIG, FPDTD, AQRPKMA, and TTTE.

Belongs to the IspF family. As to quaternary structure, homotrimer. A divalent metal cation serves as cofactor.

It catalyses the reaction 4-CDP-2-C-methyl-D-erythritol 2-phosphate = 2-C-methyl-D-erythritol 2,4-cyclic diphosphate + CMP. The protein operates within isoprenoid biosynthesis; isopentenyl diphosphate biosynthesis via DXP pathway; isopentenyl diphosphate from 1-deoxy-D-xylulose 5-phosphate: step 4/6. Its function is as follows. Involved in the biosynthesis of isopentenyl diphosphate (IPP) and dimethylallyl diphosphate (DMAPP), two major building blocks of isoprenoid compounds. Catalyzes the conversion of 4-diphosphocytidyl-2-C-methyl-D-erythritol 2-phosphate (CDP-ME2P) to 2-C-methyl-D-erythritol 2,4-cyclodiphosphate (ME-CPP) with a corresponding release of cytidine 5-monophosphate (CMP). This chain is 2-C-methyl-D-erythritol 2,4-cyclodiphosphate synthase, found in Geobacter sulfurreducens (strain ATCC 51573 / DSM 12127 / PCA).